The primary structure comprises 397 residues: MSESVHTNTSLWSKGMKAVIVAQFLSAFGDNALLFATLALLKAQFYPEWSQPILQMVFVGAYILFAPFVGQVADSFAKGRVMMFANGLKLLGAASICFGINPFLGYTLVGVGAAAYSPAKYGILGELTTGSKLVKANGLMEASTIAAILLGSVAGGVLADWHILVALAACALAYGGAVVANIYIPKLAAARPGQSWNLISMTRSFLNACTSLWRNGETRFSLVGTSLFWGAGVTLRFLLVLWVPVALGITDNATPTYLNAMVAIGIVVGAGAAAKLVTLETVSRCMPAGILIGVVVLIFSLQHELLPAYALLMLIGVLGGFFVVPLNALLQERGKKSVGAGNAIAVQNLGENSAMLLMLGIYSLAVMVGIPVVPIGIGFGALFALAITALWIWQRRH.

Over 1-17 (MSESVHTNTSLWSKGMK) the chain is Periplasmic. The chain crosses the membrane as a helical span at residues 18 to 38 (AVIVAQFLSAFGDNALLFATL). Residues 39-52 (ALLKAQFYPEWSQP) lie on the Cytoplasmic side of the membrane. A helical transmembrane segment spans residues 53–73 (ILQMVFVGAYILFAPFVGQVA). The Periplasmic segment spans residues 74 to 90 (DSFAKGRVMMFANGLKL). Residues 91–111 (LGAASICFGINPFLGYTLVGV) traverse the membrane as a helical segment. The Cytoplasmic segment spans residues 112–144 (GAAAYSPAKYGILGELTTGSKLVKANGLMEAST). A helical membrane pass occupies residues 145–165 (IAAILLGSVAGGVLADWHILV). Position 166 (Ala166) is a topological domain, periplasmic. The chain crosses the membrane as a helical span at residues 167-187 (LAACALAYGGAVVANIYIPKL). Residues 188 to 226 (AAARPGQSWNLISMTRSFLNACTSLWRNGETRFSLVGTS) lie on the Cytoplasmic side of the membrane. The helical transmembrane segment at 227–247 (LFWGAGVTLRFLLVLWVPVAL) threads the bilayer. At 248-256 (GITDNATPT) the chain is on the periplasmic side. A helical membrane pass occupies residues 257–277 (YLNAMVAIGIVVGAGAAAKLV). The Cytoplasmic segment spans residues 278–280 (TLE). The helical transmembrane segment at 281-301 (TVSRCMPAGILIGVVVLIFSL) threads the bilayer. Topologically, residues 302–304 (QHE) are periplasmic. A helical transmembrane segment spans residues 305 to 325 (LLPAYALLMLIGVLGGFFVVP). At 326 to 343 (LNALLQERGKKSVGAGNA) the chain is on the cytoplasmic side. A helical transmembrane segment spans residues 344–364 (IAVQNLGENSAMLLMLGIYSL). Topologically, residues 365–366 (AV) are periplasmic. The helical transmembrane segment at 367–387 (MVGIPVVPIGIGFGALFALAI) threads the bilayer. Topologically, residues 388–397 (TALWIWQRRH) are cytoplasmic.

This sequence belongs to the major facilitator superfamily. LplT (TC 2.A.1.42) family.

Its subcellular location is the cell inner membrane. In terms of biological role, catalyzes the facilitated diffusion of 2-acyl-glycero-3-phosphoethanolamine (2-acyl-GPE) into the cell. The sequence is that of Lysophospholipid transporter LplT from Escherichia coli O6:K15:H31 (strain 536 / UPEC).